A 445-amino-acid polypeptide reads, in one-letter code: NAD-specific glutamate dehydrogenase (445 aa).

Residue lysine 124 is part of the active site.

Belongs to the Glu/Leu/Phe/Val dehydrogenases family. In terms of assembly, homohexamer.

The protein resides in the cell surface. It carries out the reaction L-glutamate + NAD(+) + H2O = 2-oxoglutarate + NH4(+) + NADH + H(+). Functionally, probably involved in degradation rather than biosynthesis of glutamate. The polypeptide is NAD-specific glutamate dehydrogenase (gdh) (Porphyromonas gingivalis (strain ATCC 33277 / DSM 20709 / CIP 103683 / JCM 12257 / NCTC 11834 / 2561)).